A 691-amino-acid chain; its full sequence is DNA ligase (691 aa).

NAD(+) is bound by residues 41 to 45 (DAEYD), 90 to 91 (SL), and glutamate 130. Residue lysine 132 is the N6-AMP-lysine intermediate of the active site. 4 residues coordinate NAD(+): arginine 153, glutamate 190, lysine 307, and lysine 331. Zn(2+) is bound by residues cysteine 425, cysteine 428, cysteine 443, and cysteine 449. The BRCT domain maps to 610–691 (APQGVLAGKT…MHTLLEGHAR (82 aa)).

This sequence belongs to the NAD-dependent DNA ligase family. LigA subfamily. It depends on Mg(2+) as a cofactor. Mn(2+) serves as cofactor.

It carries out the reaction NAD(+) + (deoxyribonucleotide)n-3'-hydroxyl + 5'-phospho-(deoxyribonucleotide)m = (deoxyribonucleotide)n+m + AMP + beta-nicotinamide D-nucleotide.. In terms of biological role, DNA ligase that catalyzes the formation of phosphodiester linkages between 5'-phosphoryl and 3'-hydroxyl groups in double-stranded DNA using NAD as a coenzyme and as the energy source for the reaction. It is essential for DNA replication and repair of damaged DNA. The chain is DNA ligase from Burkholderia pseudomallei (strain 1106a).